The chain runs to 251 residues: Cell division protein ZapD (251 aa).

This sequence belongs to the ZapD family. In terms of assembly, interacts with FtsZ.

The protein localises to the cytoplasm. Its function is as follows. Cell division factor that enhances FtsZ-ring assembly. Directly interacts with FtsZ and promotes bundling of FtsZ protofilaments, with a reduction in FtsZ GTPase activity. This chain is Cell division protein ZapD, found in Burkholderia thailandensis (strain ATCC 700388 / DSM 13276 / CCUG 48851 / CIP 106301 / E264).